Reading from the N-terminus, the 375-residue chain is Acetylornithine aminotransferase (375 aa).

Pyridoxal 5'-phosphate is bound by residues 93–94 and Phe120; that span reads GT. Arg123 contributes to the N(2)-acetyl-L-ornithine binding site. 205 to 208 contributes to the pyridoxal 5'-phosphate binding site; sequence DEVQ. Lys234 carries the post-translational modification N6-(pyridoxal phosphate)lysine. Thr262 lines the N(2)-acetyl-L-ornithine pocket. A pyridoxal 5'-phosphate-binding site is contributed by Thr263.

It belongs to the class-III pyridoxal-phosphate-dependent aminotransferase family. ArgD subfamily. Homodimer. Pyridoxal 5'-phosphate is required as a cofactor.

It localises to the cytoplasm. The catalysed reaction is N(2)-acetyl-L-ornithine + 2-oxoglutarate = N-acetyl-L-glutamate 5-semialdehyde + L-glutamate. It functions in the pathway amino-acid biosynthesis; L-arginine biosynthesis; N(2)-acetyl-L-ornithine from L-glutamate: step 4/4. The chain is Acetylornithine aminotransferase from Staphylococcus epidermidis (strain ATCC 35984 / DSM 28319 / BCRC 17069 / CCUG 31568 / BM 3577 / RP62A).